The primary structure comprises 118 residues: Putative pterin-4-alpha-carbinolamine dehydratase (118 aa).

This sequence belongs to the pterin-4-alpha-carbinolamine dehydratase family.

The catalysed reaction is (4aS,6R)-4a-hydroxy-L-erythro-5,6,7,8-tetrahydrobiopterin = (6R)-L-erythro-6,7-dihydrobiopterin + H2O. This Xanthomonas euvesicatoria pv. vesicatoria (strain 85-10) (Xanthomonas campestris pv. vesicatoria) protein is Putative pterin-4-alpha-carbinolamine dehydratase.